A 315-amino-acid chain; its full sequence is Methionyl-tRNA formyltransferase (315 aa).

113 to 116 (SLLP) is a (6S)-5,6,7,8-tetrahydrofolate binding site.

It belongs to the Fmt family.

The enzyme catalyses L-methionyl-tRNA(fMet) + (6R)-10-formyltetrahydrofolate = N-formyl-L-methionyl-tRNA(fMet) + (6S)-5,6,7,8-tetrahydrofolate + H(+). Functionally, attaches a formyl group to the free amino group of methionyl-tRNA(fMet). The formyl group appears to play a dual role in the initiator identity of N-formylmethionyl-tRNA by promoting its recognition by IF2 and preventing the misappropriation of this tRNA by the elongation apparatus. In Yersinia enterocolitica serotype O:8 / biotype 1B (strain NCTC 13174 / 8081), this protein is Methionyl-tRNA formyltransferase.